The sequence spans 110 residues: Thiosulfate sulfurtransferase GlpE (110 aa).

The Rhodanese domain maps to 17–105 (KKEGAVVVDI…WRATYPAETA (89 aa)). Cys-65 serves as the catalytic Cysteine persulfide intermediate.

It belongs to the GlpE family.

Its subcellular location is the cytoplasm. The catalysed reaction is thiosulfate + hydrogen cyanide = thiocyanate + sulfite + 2 H(+). It catalyses the reaction thiosulfate + [thioredoxin]-dithiol = [thioredoxin]-disulfide + hydrogen sulfide + sulfite + 2 H(+). Its function is as follows. Transferase that catalyzes the transfer of sulfur from thiosulfate to thiophilic acceptors such as cyanide or dithiols. May function in a CysM-independent thiosulfate assimilation pathway by catalyzing the conversion of thiosulfate to sulfite, which can then be used for L-cysteine biosynthesis. The protein is Thiosulfate sulfurtransferase GlpE of Pseudomonas putida (strain ATCC 700007 / DSM 6899 / JCM 31910 / BCRC 17059 / LMG 24140 / F1).